The chain runs to 117 residues: Non-specific lipid-transfer protein 1 (117 aa).

An N-terminal signal peptide occupies residues 1 to 26 (MAYSAMTKLALVVALCMVVSVPIAQA). 4 disulfides stabilise this stretch: C29/C76, C39/C53, C54/C99, and C74/C113.

This sequence belongs to the plant LTP family.

Plant non-specific lipid-transfer proteins transfer phospholipids as well as galactolipids across membranes. May play a role in wax or cutin deposition in the cell walls of expanding epidermal cells and certain secretory tissues. This Prunus dulcis (Almond) protein is Non-specific lipid-transfer protein 1.